The following is a 116-amino-acid chain: Large ribosomal subunit protein bL20c (116 aa).

Belongs to the bacterial ribosomal protein bL20 family.

It localises to the plastid. It is found in the chloroplast. Its function is as follows. Binds directly to 23S ribosomal RNA and is necessary for the in vitro assembly process of the 50S ribosomal subunit. It is not involved in the protein synthesizing functions of that subunit. The sequence is that of Large ribosomal subunit protein bL20c from Rhodomonas salina (Cryptomonas salina).